Consider the following 374-residue polypeptide: MEMO1 family protein aq_1336 (374 aa).

It belongs to the MEMO1 family.

In Aquifex aeolicus (strain VF5), this protein is MEMO1 family protein aq_1336.